Consider the following 31-residue polypeptide: Cytochrome b6-f complex subunit 6 (31 aa).

The chain crosses the membrane as a helical span at residues 3-23 (TLTSYFGFLLVALTITLVLFI).

It belongs to the PetL family. As to quaternary structure, the 4 large subunits of the cytochrome b6-f complex are cytochrome b6, subunit IV (17 kDa polypeptide, PetD), cytochrome f and the Rieske protein, while the 4 small subunits are PetG, PetL, PetM and PetN. The complex functions as a dimer.

It is found in the plastid. The protein localises to the chloroplast thylakoid membrane. In terms of biological role, component of the cytochrome b6-f complex, which mediates electron transfer between photosystem II (PSII) and photosystem I (PSI), cyclic electron flow around PSI, and state transitions. PetL is important for photoautotrophic growth as well as for electron transfer efficiency and stability of the cytochrome b6-f complex. In Populus alba (White poplar), this protein is Cytochrome b6-f complex subunit 6.